Consider the following 278-residue polypeptide: Indole-3-glycerol phosphate synthase (278 aa).

The protein belongs to the TrpC family.

It carries out the reaction 1-(2-carboxyphenylamino)-1-deoxy-D-ribulose 5-phosphate + H(+) = (1S,2R)-1-C-(indol-3-yl)glycerol 3-phosphate + CO2 + H2O. The protein operates within amino-acid biosynthesis; L-tryptophan biosynthesis; L-tryptophan from chorismate: step 4/5. In Pseudomonas paraeruginosa (strain DSM 24068 / PA7) (Pseudomonas aeruginosa (strain PA7)), this protein is Indole-3-glycerol phosphate synthase.